Reading from the N-terminus, the 260-residue chain is Hydroxyethylthiazole kinase 1 (260 aa).

Residue Met39 participates in substrate binding. ATP-binding residues include Arg115 and Thr160. Position 187 (Gly187) interacts with substrate.

This sequence belongs to the Thz kinase family. The cofactor is Mg(2+).

It carries out the reaction 5-(2-hydroxyethyl)-4-methylthiazole + ATP = 4-methyl-5-(2-phosphooxyethyl)-thiazole + ADP + H(+). It participates in cofactor biosynthesis; thiamine diphosphate biosynthesis; 4-methyl-5-(2-phosphoethyl)-thiazole from 5-(2-hydroxyethyl)-4-methylthiazole: step 1/1. Its function is as follows. Catalyzes the phosphorylation of the hydroxyl group of 4-methyl-5-beta-hydroxyethylthiazole (THZ). The protein is Hydroxyethylthiazole kinase 1 of Streptococcus pneumoniae (strain Hungary19A-6).